A 355-amino-acid polypeptide reads, in one-letter code: MLFINLRTLLNNAALRNGHNFVVRNFRCGQPVQDKVQLKGRDLLTLKNFTGEEIKYMLWLSADLKFRIKQKGEYLPLLQGKSLGMIFEKRSTRTRLSTETGFALLGGHPCFLTTDDIHLGVNESLTDTARVLSSMTDAVLARVYKQSDLDILAKEASIPIVNGLSDLYHPIQILADYLTLQEHYGSLKGLTLSWIGDGNNILHSIMMSAAKFGMHLQVATPKGYEPDPSITKLAEQYAKENGTKLSLTNDPLEAACGGNVLITDTWISMGQEEEKKKRLQAFQGYQVTMKTAKVAAPDWTFLHCLPRKPEEVDDEVFYSPRSLVFPEAENRKWTIMAVMVSLLTDYSPQLQKPKF.

Residues 1 to 35 constitute a mitochondrion transit peptide; the sequence is MLFINLRTLLNNAALRNGHNFVVRNFRCGQPVQDK. The residue at position 71 (Lys-71) is an N6-acetyllysine; alternate. Lys-71 bears the N6-succinyllysine; alternate mark. Lys-81 carries the post-translational modification N6-succinyllysine. Position 89 is an N6-acetyllysine; alternate (Lys-89). Lys-89 is subject to N6-succinyllysine; alternate. 91–95 lines the carbamoyl phosphate pocket; sequence STRTR. Position 134 is a phosphoserine (Ser-134). Arg-142 contributes to the carbamoyl phosphate binding site. Arg-142 contributes to the L-ornithine binding site. Residue Lys-145 is modified to N6-acetyllysine; alternate. N6-succinyllysine; alternate is present on Lys-145. A carbamoyl phosphate-binding site is contributed by His-169. Position 200 (Asn-200) interacts with L-ornithine. Residues Lys-222, Lys-232, and Lys-239 each carry the N6-acetyllysine; alternate modification. N6-succinyllysine; alternate occurs at positions 222, 232, and 239. Lys-244 is subject to N6-acetyllysine. 264–268 is a binding site for L-ornithine; the sequence is DTWIS. N6-succinyllysine is present on residues Lys-275 and Lys-290. The residue at position 293 (Lys-293) is an N6-acetyllysine; alternate. The residue at position 293 (Lys-293) is an N6-succinyllysine; alternate. Residue 303–306 coordinates L-ornithine; the sequence is HCLP. Cys-304 is a catalytic residue. Lys-308 carries the post-translational modification N6-acetyllysine; alternate. Lys-308 is subject to N6-succinyllysine; alternate. Arg-331 provides a ligand contact to carbamoyl phosphate. Residue Arg-331 participates in L-ornithine binding.

This sequence belongs to the aspartate/ornithine carbamoyltransferase superfamily. OTCase family. As to quaternary structure, homotrimer. Post-translationally, acetylation at Lys-89 negatively regulates ornithine carbamoyltransferase activity in response to nutrient signals.

It localises to the mitochondrion matrix. It carries out the reaction carbamoyl phosphate + L-ornithine = L-citrulline + phosphate + H(+). It participates in nitrogen metabolism; urea cycle; L-citrulline from L-ornithine and carbamoyl phosphate: step 1/1. Negatively regulated by lysine acetylation. Catalyzes the second step of the urea cycle, the condensation of carbamoyl phosphate with L-ornithine to form L-citrulline. The urea cycle ensures the detoxification of ammonia by converting it to urea for excretion. The polypeptide is Ornithine transcarbamylase, mitochondrial (Ovis aries (Sheep)).